Consider the following 372-residue polypeptide: Prostaglandin E synthase 2 (372 aa).

Topologically, residues 1–54 (MAHAVRALWPHGRALAWRLGDRPALGLHAQSRAGFTGAAGGSGPAATARKGGPR) are lumenal. Residues 55-71 (LLGAAALALGGALGLYH) form a helical membrane-spanning segment. Residues 72–372 (TARWHLRAQD…VEKAIAEAPQ (301 aa)) lie on the Cytoplasmic side of the membrane. The Glutaredoxin domain occupies 87–190 (SATQLSLSSR…DIITYYPPMK (104 aa)). Residue Ser-92 is modified to Phosphoserine. Residues Val-145 and 161-162 (DS) contribute to the glutathione site. Residues 259 to 372 (DYIVKEGNFG…VEKAIAEAPQ (114 aa)) enclose the GST C-terminal domain.

The protein belongs to the GST superfamily. As to quaternary structure, may interact with CEBPB. Interacts with EXOSC10. Homodimer. In terms of processing, synthesized as a Golgi membrane-associated protein, and the proteolytic removal of the N-terminal hydrophobic domain leads to the formation of a mature cytosolic enzyme. In terms of tissue distribution, detected in heart (at protein level). Widely expressed. Expressed in heart &gt; kidney &gt; muscle &gt; testis &gt; endometrium = ovary &gt; myometrium = spleen = lung. In endometrium, it is mainly expressed in luminal epithelial cells followed by glandular epithelial cells, but expression is also present in stromal cells at a lower level.

The protein resides in the microsome membrane. It is found in the cytoplasm. The enzyme catalyses prostaglandin H2 = prostaglandin E2. The catalysed reaction is prostaglandin H2 = (12S)-hydroxy-(5Z,8E,10E)-heptadecatrienoate + malonaldehyde. It functions in the pathway lipid metabolism; prostaglandin biosynthesis. Its activity is regulated as follows. Isomerase activity is increased by sulfhydril compounds. Dithiothreitol (DTT) is most effective, followed by glutathione (GSH) and 2-mercaptoethanol. Functionally, isomerase that catalyzes the conversion of PGH2 into the more stable prostaglandin E2 (PGE2) (in vitro). The biological function and the GSH-dependent property of PTGES2 is still under debate. In vivo, PTGES2 could form a complex with GSH and heme and would not participate in PGE2 synthesis but would catalyze the degradation of prostaglandin E2 H2 (PGH2) to 12(S)-hydroxy-5(Z),8(E),10(E)-heptadecatrienoic acid (HHT) and malondialdehyde (MDA). In Bos taurus (Bovine), this protein is Prostaglandin E synthase 2 (PTGES2).